The sequence spans 213 residues: Thymidylate kinase (213 aa).

Position 10–17 (10–17) interacts with ATP; that stretch reads GLEGAGKT.

The protein belongs to the thymidylate kinase family.

The catalysed reaction is dTMP + ATP = dTDP + ADP. Its function is as follows. Phosphorylation of dTMP to form dTDP in both de novo and salvage pathways of dTTP synthesis. This chain is Thymidylate kinase, found in Salmonella dublin (strain CT_02021853).